The primary structure comprises 483 residues: Ribulose bisphosphate carboxylase large chain (483 aa).

Positions 1–2 are excised as a propeptide; it reads MS. Substrate-binding residues include asparagine 123 and threonine 173. Lysine 175 (proton acceptor) is an active-site residue. Lysine 177 is a substrate binding site. Mg(2+) contacts are provided by lysine 201, aspartate 203, and glutamate 204. Lysine 201 is modified (N6-carboxylysine). Serine 208 is subject to Phosphoserine. The Proton acceptor role is filled by histidine 294. Residues arginine 295 and histidine 327 each coordinate substrate. The residue at position 330 (threonine 330) is a Phosphothreonine. Serine 379 is a substrate binding site.

It belongs to the RuBisCO large chain family. Type I subfamily. Heterohexadecamer of 8 large chains and 8 small chains; disulfide-linked. The disulfide link is formed within the large subunit homodimers. The cofactor is Mg(2+). Post-translationally, the disulfide bond which can form in the large chain dimeric partners within the hexadecamer appears to be associated with oxidative stress and protein turnover.

The protein localises to the plastid. The protein resides in the chloroplast. It carries out the reaction 2 (2R)-3-phosphoglycerate + 2 H(+) = D-ribulose 1,5-bisphosphate + CO2 + H2O. It catalyses the reaction D-ribulose 1,5-bisphosphate + O2 = 2-phosphoglycolate + (2R)-3-phosphoglycerate + 2 H(+). RuBisCO catalyzes two reactions: the carboxylation of D-ribulose 1,5-bisphosphate, the primary event in carbon dioxide fixation, as well as the oxidative fragmentation of the pentose substrate in the photorespiration process. Both reactions occur simultaneously and in competition at the same active site. The polypeptide is Ribulose bisphosphate carboxylase large chain (Aethionema cordifolium (Lebanon stonecress)).